A 495-amino-acid polypeptide reads, in one-letter code: MTDKDIPDEWDTISEDQIKNNLLTLEISNKLKELKLLEEEYEKLEEKEKEIENKELNKTDNKIKEFIKNEIKKGGEEINKEQEQDGEEEEPLLLINFTKWSYNKIKYIGGGKIENQDLFDRLLNKLNSEEQFFITMTDDLLERELAFHTTNKQWRDDIKQLEQAYKGDYFSLLSYPPMLGGFLLESIWSKIKERTEWKSVNILKCIYLAKTNRSLLYKHNMALAIEFMALEQKLLGPTAKRLKDEEDLEYKIKLRQYEEIMQKRYENEINEGIIKNLQQVIYTNEGISNNLNRINNNKINEINDDYNNNNNENYSGSDNDDGSYCSTCDGSGSDYDNDENNDDENNDENNNNNNNNNNNNNNNNDEDRMIEEIEGDDTTSTSFQQSDDDEADNELDEEDNRKNKKEKLIEERKIKEIEAERIHKENEKRKIEAPPPPVLNILDKIIAMIFSKLTVAQSNKESHYQMLNRLESSIKETWIEEFGCLPPNCLWREEQ.

Low complexity predominate over residues 305-317 (DYNNNNNENYSGS). The tract at residues 305–404 (DYNNNNNENY…LDEEDNRKNK (100 aa)) is disordered. The span at 335–347 (YDNDENNDDENND) shows a compositional bias: acidic residues. A compositionally biased stretch (low complexity) spans 348–363 (ENNNNNNNNNNNNNNN). Positions 386–398 (SDDDEADNELDEE) are enriched in acidic residues.

This is an uncharacterized protein from Dictyostelium discoideum (Social amoeba).